Consider the following 127-residue polypeptide: Small ribosomal subunit protein uS11 (127 aa).

The protein belongs to the universal ribosomal protein uS11 family. Part of the 30S ribosomal subunit. Interacts with proteins S7 and S18. Binds to IF-3.

Located on the platform of the 30S subunit, it bridges several disparate RNA helices of the 16S rRNA. Forms part of the Shine-Dalgarno cleft in the 70S ribosome. The sequence is that of Small ribosomal subunit protein uS11 from Chlorobaculum tepidum (strain ATCC 49652 / DSM 12025 / NBRC 103806 / TLS) (Chlorobium tepidum).